We begin with the raw amino-acid sequence, 447 residues long: Serine--tRNA ligase (447 aa).

Thr-245–Glu-247 serves as a coordination point for L-serine. ATP-binding positions include Arg-276–Glu-278 and Val-292. Glu-299 lines the L-serine pocket. Residue Glu-363 to Ser-366 participates in ATP binding. Thr-398 contacts L-serine.

This sequence belongs to the class-II aminoacyl-tRNA synthetase family. Type-1 seryl-tRNA synthetase subfamily. As to quaternary structure, homodimer. The tRNA molecule binds across the dimer.

The protein resides in the cytoplasm. The enzyme catalyses tRNA(Ser) + L-serine + ATP = L-seryl-tRNA(Ser) + AMP + diphosphate + H(+). The catalysed reaction is tRNA(Sec) + L-serine + ATP = L-seryl-tRNA(Sec) + AMP + diphosphate + H(+). It functions in the pathway aminoacyl-tRNA biosynthesis; selenocysteinyl-tRNA(Sec) biosynthesis; L-seryl-tRNA(Sec) from L-serine and tRNA(Sec): step 1/1. Catalyzes the attachment of serine to tRNA(Ser). Is also able to aminoacylate tRNA(Sec) with serine, to form the misacylated tRNA L-seryl-tRNA(Sec), which will be further converted into selenocysteinyl-tRNA(Sec). The protein is Serine--tRNA ligase of Pyrobaculum neutrophilum (strain DSM 2338 / JCM 9278 / NBRC 100436 / V24Sta) (Thermoproteus neutrophilus).